The sequence spans 153 residues: Histone H2B.3 (153 aa).

The span at 1–28 shows a compositional bias: basic and acidic residues; sequence MAPKADKKPAAKKPAEEEPATEKAEKAP. Residues 1 to 60 form a disordered region; it reads MAPKADKKPAAKKPAEEEPATEKAEKAPAGKKPKAEKRLPAGKSAGKEGGEGKKGKKKAK. N6-acetyllysine occurs at positions 7 and 37. A Glycyl lysine isopeptide (Lys-Gly) (interchain with G-Cter in ubiquitin) cross-link involves residue Lys149.

This sequence belongs to the histone H2B family. In terms of assembly, the nucleosome is a histone octamer containing two molecules each of H2A, H2B, H3 and H4 assembled in one H3-H4 heterotetramer and two H2A-H2B heterodimers. The octamer wraps approximately 147 bp of DNA. Post-translationally, can be acetylated to form H2BK6ac and H2BK33ac. Monoubiquitinated to form H2BK143ub1; may give a specific tag for epigenetic transcriptional activation.

Its subcellular location is the nucleus. It localises to the chromosome. Functionally, core component of nucleosome. Nucleosomes wrap and compact DNA into chromatin, limiting DNA accessibility to the cellular machineries which require DNA as a template. Histones thereby play a central role in transcription regulation, DNA repair, DNA replication and chromosomal stability. DNA accessibility is regulated via a complex set of post-translational modifications of histones, also called histone code, and nucleosome remodeling. The protein is Histone H2B.3 of Zea mays (Maize).